A 191-amino-acid chain; its full sequence is MEFLVQKIGMSRTIDANSTPVTLLKVLQAKVCQLENGKALVAYAMHKKHNKAIEGQQKKYQLSKEFNHFATLKASQQKELGDLDLSALETLKRVKASFKTKGRGFAGVMKRWNFQGGPAAHGSRFHRRPGSIGNREWPGRVQKGRKMAGHYGNELVTCQNEVLSFDKESMVLVLKGSVAGFSGAYGRIRAV.

Residues Ala119–Pro138 form a disordered region.

This sequence belongs to the universal ribosomal protein uL3 family. Part of the 50S ribosomal subunit. Forms a cluster with proteins L14 and L19.

Functionally, one of the primary rRNA binding proteins, it binds directly near the 3'-end of the 23S rRNA, where it nucleates assembly of the 50S subunit. The sequence is that of Large ribosomal subunit protein uL3 (rplC) from Helicobacter pylori (strain ATCC 700392 / 26695) (Campylobacter pylori).